The following is a 347-amino-acid chain: Gamma-glutamyl hydrolase B (347 aa).

The signal sequence occupies residues 1–22 (MIKLFSLFIYLYLISNLKLINT). The region spanning 23 to 314 (INNTPVIGIL…THVEQIYIFN (292 aa)) is the Gamma-glutamyl hydrolase domain. Cys-128 functions as the Nucleophile in the catalytic mechanism. N-linked (GlcNAc...) asparagine glycans are attached at residues Asn-152, Asn-158, and Asn-201. His-240 serves as the catalytic Proton donor. N-linked (GlcNAc...) asparagine glycans are attached at residues Asn-273, Asn-314, and Asn-318.

The protein belongs to the peptidase C26 family.

The protein localises to the secreted. It localises to the extracellular space. It catalyses the reaction (6S)-5,6,7,8-tetrahydrofolyl-(gamma-L-Glu)(n) + (n-1) H2O = (6S)-5,6,7,8-tetrahydrofolate + (n-1) L-glutamate. The chain is Gamma-glutamyl hydrolase B (gghB) from Dictyostelium discoideum (Social amoeba).